Reading from the N-terminus, the 689-residue chain is Acetyl-coenzyme A synthetase 2-like, mitochondrial (689 aa).

A mitochondrion-targeting transit peptide spans 1-37 (MAARTLGRGVGRLLGSLRGLSGQPARPPCGVSAPRRA). The tract at residues 17–46 (LRGLSGQPARPPCGVSAPRRAASGPSGSAP) is disordered. A compositionally biased stretch (low complexity) spans 32-46 (SAPRRAASGPSGSAP). CoA contacts are provided by residues 224–227 (RGGR) and Thr341. Position 396 is an N6-acetyllysine (Lys396). Residues 417–419 (GEP), 441–446 (DTWWQT), Asp533, and Arg548 contribute to the ATP site. Ser556 contacts CoA. An ATP-binding site is contributed by Arg559. Lys642 carries the N6-acetyllysine modification.

It belongs to the ATP-dependent AMP-binding enzyme family. In terms of assembly, interacts with SIRT3. Reversibly acetylated on Lys-642. The acetyl-CoA synthase activity is inhibited by acetylation and activated by deacetylation mediated by the deacetylase SIRT3.

It is found in the mitochondrion matrix. It catalyses the reaction acetate + ATP + CoA = acetyl-CoA + AMP + diphosphate. It carries out the reaction propanoate + ATP + CoA = propanoyl-CoA + AMP + diphosphate. Its activity is regulated as follows. Inhibited by acetylation at Lys-642 and activated by deacetylation mediated by the deacetylase SIRT3. In terms of biological role, catalyzes the synthesis of acetyl-CoA from short-chain fatty acids. Acetate is the preferred substrate. Can also utilize propionate with a much lower affinity. Provides acetyl-CoA that is utilized mainly for oxidation under ketogenic conditions. Involved in thermogenesis under ketogenic conditions, using acetate as a vital fuel when carbohydrate availability is insufficient. The sequence is that of Acetyl-coenzyme A synthetase 2-like, mitochondrial (ACSS1) from Homo sapiens (Human).